The chain runs to 532 residues: Probable cyclic di-GMP phosphodiesterase PdeD (532 aa).

The next 2 helical transmembrane spans lie at 16–36 and 245–265; these read MIVCTICALVTLASTLSVRFI and LPLAVLLSLLVGYIAWLATAY. The EAL domain occupies 266-515; sequence RMSFSREINL…DFPKWLAGSQ (250 aa).

It localises to the cell membrane. It carries out the reaction 3',3'-c-di-GMP + H2O = 5'-phosphoguanylyl(3'-&gt;5')guanosine + H(+). Its function is as follows. Phosphodiesterase (PDE) that catalyzes the hydrolysis of cyclic-di-GMP (c-di-GMP) to 5'-pGpG. May serve as a negative regulator of cellulose synthesis (as has been suggested for S.typhimurium); overexpression inhibits cell aggregation in strains able to produce adhesive curli fimbriae. Cyclic-di-GMP is a second messenger which controls cell surface-associated traits in bacteria. The polypeptide is Probable cyclic di-GMP phosphodiesterase PdeD (Escherichia coli (strain K12)).